Reading from the N-terminus, the 264-residue chain is Apolipoprotein A-I (264 aa).

Residues 1 to 18 (MKAVVLTVAVLFLTGSQA) form the signal peptide. 2 consecutive repeat copies span residues 67–88 (LKLL…EQLG) and 89–110 (PVTQ…QEMN). The 10 X approximate tandem repeats stretch occupies residues 67–264 (LKLLDNWDTL…DDAAKKLSSQ (198 aa)). A Methionine sulfoxide modification is found at methionine 109. The stretch at 111 to 121 (KDLEEVKQKVQ) is one 3; half-length repeat. Repeat copies occupy residues 122-143 (PYLE…QKVE), 144-165 (PLST…EKLT), and 166-187 (PLGE…TQLA). Residues 188–207 (PYSDKMRERLAERLTALKDS) form a 7; truncated repeat. Methionine 193 is modified (methionine sulfoxide). Repeat unit 8 spans residues 208-229 (ASFAEYHAKASEHLKTLREKAK). The stretch at 230 to 240 (PAIEDLGQGLL) is one 9; half-length repeat. Repeat 10 spans residues 241 to 264 (PVLENLKASFLSAIDDAAKKLSSQ).

This sequence belongs to the apolipoprotein A1/A4/E family. In terms of assembly, homodimer. Interacts with APOA1BP and CLU. Component of a sperm activating protein complex (SPAP), consisting of APOA1, an immunoglobulin heavy chain, an immunoglobulin light chain and albumin. Interacts with NDRG1. Interacts with SCGB3A2. Interacts with NAXE and YJEFN3. In terms of processing, glycosylated. Palmitoylated. Post-translationally, phosphorylation sites are present in the extracellular medium.

Its subcellular location is the secreted. Participates in the reverse transport of cholesterol from tissues to the liver for excretion by promoting cholesterol efflux from tissues and by acting as a cofactor for the lecithin cholesterol acyltransferase (LCAT). As part of the SPAP complex, activates spermatozoa motility. The sequence is that of Apolipoprotein A-I (APOA1) from Castor canadensis (American beaver).